We begin with the raw amino-acid sequence, 502 residues long: RxLR effector protein BLN06 (502 aa).

An N-terminal signal peptide occupies residues 1 to 20 (MTLLHCWLLLVGHLASTAYA). Residue Asn-38 is glycosylated (N-linked (GlcNAc...) asparagine). The short motif at 50–53 (LEER) is the dEER element.

This sequence belongs to the RxLR effector family.

The protein resides in the secreted. The protein localises to the host cell membrane. Its function is as follows. Secreted effector that triggers a robust hypersensitive response (HR) in Lactuca serriola LS102. The response to BLN06 was visible as chlorosis but not as strong necrosis. This Bremia lactucae (Lettuce downy mildew) protein is RxLR effector protein BLN06.